The sequence spans 272 residues: Streptomycin 3''-kinase (272 aa).

Aspartate 190 serves as the catalytic Proton acceptor.

Belongs to the aminoglycoside phosphotransferase family.

It catalyses the reaction streptomycin + ATP = streptomycin 3''-phosphate + ADP + H(+). Its function is as follows. The aminoglycoside phosphotransferases achieve inactivation of their antibiotic substrates by phosphorylation. This chain is Streptomycin 3''-kinase (aphE), found in Streptomyces griseus.